Reading from the N-terminus, the 307-residue chain is Porphobilinogen deaminase (307 aa).

Position 239 is an S-(dipyrrolylmethanemethyl)cysteine (C239).

The protein belongs to the HMBS family. Monomer. Dipyrromethane is required as a cofactor.

It catalyses the reaction 4 porphobilinogen + H2O = hydroxymethylbilane + 4 NH4(+). It participates in porphyrin-containing compound metabolism; protoporphyrin-IX biosynthesis; coproporphyrinogen-III from 5-aminolevulinate: step 2/4. Functionally, tetrapolymerization of the monopyrrole PBG into the hydroxymethylbilane pre-uroporphyrinogen in several discrete steps. The chain is Porphobilinogen deaminase from Campylobacter jejuni subsp. jejuni serotype O:23/36 (strain 81-176).